The chain runs to 360 residues: Aminomethyltransferase (360 aa).

Belongs to the GcvT family. In terms of assembly, the glycine cleavage system is composed of four proteins: P, T, L and H.

The enzyme catalyses N(6)-[(R)-S(8)-aminomethyldihydrolipoyl]-L-lysyl-[protein] + (6S)-5,6,7,8-tetrahydrofolate = N(6)-[(R)-dihydrolipoyl]-L-lysyl-[protein] + (6R)-5,10-methylene-5,6,7,8-tetrahydrofolate + NH4(+). The glycine cleavage system catalyzes the degradation of glycine. This is Aminomethyltransferase from Legionella pneumophila (strain Paris).